The chain runs to 79 residues: Small ribosomal subunit protein uS17 (79 aa).

It belongs to the universal ribosomal protein uS17 family. As to quaternary structure, part of the 30S ribosomal subunit.

One of the primary rRNA binding proteins, it binds specifically to the 5'-end of 16S ribosomal RNA. This chain is Small ribosomal subunit protein uS17, found in Orientia tsutsugamushi (strain Boryong) (Rickettsia tsutsugamushi).